Here is a 341-residue protein sequence, read N- to C-terminus: L-threonine 3-dehydrogenase (341 aa).

Cys38 is a Zn(2+) binding site. Catalysis depends on charge relay system residues Thr40 and His43. Positions 63, 64, 93, 96, 99, and 107 each coordinate Zn(2+). NAD(+) contacts are provided by residues Ile175, Asp195, Arg200, 262 to 264 (LGI), and 286 to 287 (IY).

Belongs to the zinc-containing alcohol dehydrogenase family. As to quaternary structure, homotetramer. It depends on Zn(2+) as a cofactor.

Its subcellular location is the cytoplasm. It catalyses the reaction L-threonine + NAD(+) = (2S)-2-amino-3-oxobutanoate + NADH + H(+). It functions in the pathway amino-acid degradation; L-threonine degradation via oxydo-reductase pathway; glycine from L-threonine: step 1/2. In terms of biological role, catalyzes the NAD(+)-dependent oxidation of L-threonine to 2-amino-3-ketobutyrate. In Shewanella sp. (strain MR-7), this protein is L-threonine 3-dehydrogenase.